The chain runs to 943 residues: Translation initiation factor IF-2 (943 aa).

Residues 46-359 (IKGMLSKQSA…MPQRKERPLP (314 aa)) are disordered. The span at 57-76 (KAPSSQAAKTPAKAAKTSSA) shows a compositional bias: low complexity. 2 stretches are compositionally biased toward basic and acidic residues: residues 92-103 (SNDHADVAEHSQ) and 110-124 (AKQE…KTSD). The segment covering 130–141 (SKSTILRPRSTQ) has biased composition (polar residues). Over residues 142 to 190 (TAHTNTNHNRGGNTASANNTANGRNSNRSNNNNNNRSANNANRSGNNNR) the composition is skewed to low complexity. 3 stretches are compositionally biased toward basic and acidic residues: residues 191-205 (SNER…RFDN), 239-250 (ASERQQPKRQEA), and 259-271 (KRSE…RPRT). Low complexity-rich tracts occupy residues 289 to 299 (PAAAAPKPASA) and 315 to 330 (NFGR…GFNR). Residues 331 to 342 (NNRRNKKNKRRQ) are compositionally biased toward basic residues. Positions 346–358 (PKKEMPQRKERPL) are enriched in basic and acidic residues. The region spanning 444 to 613 (PRPPVVTIMG…LLEADVLELK (170 aa)) is the tr-type G domain. Positions 453–460 (GHVDHGKT) are G1. 453 to 460 (GHVDHGKT) contributes to the GTP binding site. The G2 stretch occupies residues 478 to 482 (GITQH). The segment at 499–502 (DTPG) is G3. GTP contacts are provided by residues 499-503 (DTPGH) and 553-556 (NKID). A G4 region spans residues 553–556 (NKID). The tract at residues 589 to 591 (SAK) is G5.

Belongs to the TRAFAC class translation factor GTPase superfamily. Classic translation factor GTPase family. IF-2 subfamily.

It is found in the cytoplasm. Its function is as follows. One of the essential components for the initiation of protein synthesis. Protects formylmethionyl-tRNA from spontaneous hydrolysis and promotes its binding to the 30S ribosomal subunits. Also involved in the hydrolysis of GTP during the formation of the 70S ribosomal complex. The sequence is that of Translation initiation factor IF-2 from Lacticaseibacillus casei (strain BL23) (Lactobacillus casei).